The following is a 272-amino-acid chain: Small ribosomal subunit protein uS2 (272 aa).

A disordered region spans residues Leu-251–Glu-272. The span at Thr-253–Glu-264 shows a compositional bias: low complexity.

It belongs to the universal ribosomal protein uS2 family.

This is Small ribosomal subunit protein uS2 from Bifidobacterium adolescentis (strain ATCC 15703 / DSM 20083 / NCTC 11814 / E194a).